We begin with the raw amino-acid sequence, 205 residues long: Large ribosomal subunit protein uL4 (205 aa).

The disordered stretch occupies residues 56–78 (ISGTTAKPYRQKHTGRARQGSLR).

This sequence belongs to the universal ribosomal protein uL4 family. As to quaternary structure, part of the 50S ribosomal subunit.

Functionally, one of the primary rRNA binding proteins, this protein initially binds near the 5'-end of the 23S rRNA. It is important during the early stages of 50S assembly. It makes multiple contacts with different domains of the 23S rRNA in the assembled 50S subunit and ribosome. Forms part of the polypeptide exit tunnel. The sequence is that of Large ribosomal subunit protein uL4 from Ehrlichia canis (strain Jake).